A 134-amino-acid polypeptide reads, in one-letter code: UPF0756 membrane protein YeaL (134 aa).

Helical transmembrane passes span 14–34 (ALGF…LIIV), 51–71 (LTVG…SGTL), 86–106 (LVAI…ITLM), and 110–130 (PQLV…FRGV).

This sequence belongs to the UPF0756 family.

It is found in the cell membrane. This is UPF0756 membrane protein YeaL from Salmonella typhimurium (strain LT2 / SGSC1412 / ATCC 700720).